The primary structure comprises 652 residues: Protein high chlorophyll fluorescent 107 (652 aa).

Disordered stretches follow at residues 1 to 21 (MHFFFVPNSSSSSPSPANTSS) and 78 to 121 (VFSP…EGKK). The N-terminal 68 residues, 1–68 (MHFFFVPNSS…TFSSKNTYLY (68 aa)), are a transit peptide targeting the chloroplast. Residues 105–121 (PLLENSDKESSEEEGKK) are compositionally biased toward basic and acidic residues. TPR repeat units lie at residues 168–201 (LDLSLYKAKVLARNFRYKDAEKILEKCIAYWPED), 202–235 (GRPYVALGKILSKQSKLAEARILYEKGCQSTQGE), 237–270 (SYIWQCWAVLENRLGNVRRARELFDAATVADKKH), 271–304 (VAAWHGWANLEIKQGNISKARNLLAKGLKFCGRN), 305–338 (EYIYQTLALLEAKAGRYEQARYLFKQATICNSRS), 339–372 (CASWLAWAQLEIQQERYPAARKLFEKAVQASPKN), 374–406 (FAWHVWGVFEAGVGNVERGRKLLKIGHALNPRD), 407–440 (PVLLQSLGLLEYKHSSANLARALLRRASELDPRH), 441–474 (QPVWIAWGWMEWKEGNTTTARELYQRALSIDANT), 478–511 (SRCLQAWGVLEQRAGNLSAARRLFRSSLNINSQS), 543–576 (TEVVDDASWVTGFLDIIDPALDTVKRLLNFGQNN), and 598–631 (QQPESSAGREDIETGSGFNLDVFLRSKLSLDPLK). Positions 585–610 (LRNMNRTKDSQSNQQPESSAGREDIE) are disordered.

In terms of assembly, may form homomultimers. Part of a multi-subunit complex in the range of 60-190 and 600-800 kDa in chloroplast membranes.

It is found in the plastid. Its subcellular location is the chloroplast. The protein resides in the chloroplast membrane. It localises to the chloroplast stroma. Involved, directly or indirectly, in the processing of chloroplast encoded mRNAs. Exhibits sequence-specific RNA binding and RNA remodeling activities, probably leading to the activation of translation of the target gene cluster psbB-psbT-psbH-petB-petD. Blocks 5'-3' and 3'-5' exoribonucleases (e.g. polynucleotide phosphorylase (PNPase), RNase R) in vitro. Necessary for intercistronic RNA processing of the psbH 5' untranslated region or the stabilization of 5' processed psbH RNAs. Also required for the synthesis of psbB. This chain is Protein high chlorophyll fluorescent 107, found in Arabidopsis thaliana (Mouse-ear cress).